The following is a 139-amino-acid chain: ATP synthase epsilon chain (139 aa).

The protein belongs to the ATPase epsilon chain family. F-type ATPases have 2 components, CF(1) - the catalytic core - and CF(0) - the membrane proton channel. CF(1) has five subunits: alpha(3), beta(3), gamma(1), delta(1), epsilon(1). CF(0) has three main subunits: a, b and c.

The protein resides in the cell inner membrane. Functionally, produces ATP from ADP in the presence of a proton gradient across the membrane. In Pseudomonas entomophila (strain L48), this protein is ATP synthase epsilon chain.